A 107-amino-acid polypeptide reads, in one-letter code: Insulin-like peptide 6 (107 aa).

An N-terminal signal peptide occupies residues 1–33; sequence MVLKVPTSKVLLVLATLFAVAAMISSWMPQVAA. Cystine bridges form between cysteine 48–cysteine 91, cysteine 60–cysteine 105, and cysteine 90–cysteine 96. A propeptide spans 67 to 76 (connecting peptide); that stretch reads LGDVFPNSFG.

This sequence belongs to the insulin family. As to quaternary structure, heterodimer of a B chain and an A chain linked by two disulfide bonds. In terms of tissue distribution, expressed at a low level in the larval gut.

The protein localises to the secreted. Functionally, possible ligand of InR/insulin-like receptor. In Drosophila melanogaster (Fruit fly), this protein is Insulin-like peptide 6.